The chain runs to 517 residues: ATP synthase subunit beta (517 aa).

167–174 is a binding site for ATP; that stretch reads GGAGVGKT. 2 stretches are compositionally biased toward basic and acidic residues: residues 475–484 and 495–508; these read AESMGAKMDD and DSKD…KADD. Residues 475-517 are disordered; that stretch reads AESMGAKMDDGGSDGAPPPSDSKDKGKGDSKADDKGDDADKDA.

Belongs to the ATPase alpha/beta chains family. F-type ATPases have 2 components, CF(1) - the catalytic core - and CF(0) - the membrane proton channel. CF(1) has five subunits: alpha(3), beta(3), gamma(1), delta(1), epsilon(1). CF(0) has three main subunits: a(1), b(2) and c(9-12). The alpha and beta chains form an alternating ring which encloses part of the gamma chain. CF(1) is attached to CF(0) by a central stalk formed by the gamma and epsilon chains, while a peripheral stalk is formed by the delta and b chains.

It is found in the cell membrane. It carries out the reaction ATP + H2O + 4 H(+)(in) = ADP + phosphate + 5 H(+)(out). Produces ATP from ADP in the presence of a proton gradient across the membrane. The catalytic sites are hosted primarily by the beta subunits. In Mycobacterium sp. (strain JLS), this protein is ATP synthase subunit beta.